Reading from the N-terminus, the 130-residue chain is MGLLLLLVGIGGGFGAMARFALTQATASISKQIPLGILLCNIIGSLIIGMMAAFLIETKLFNEDVSTYVRFLLVTGFLGGFTTFSSFSLDILNLLQRGEIFIAIGYIMVSVLASLIAVILGFYIVMGVYK.

Helical transmembrane passes span 2 to 22, 36 to 56, 71 to 91, and 100 to 120; these read GLLL…RFAL, GILL…AFLI, FLLV…SLDI, and IFIA…AVIL. Residues Gly79 and Thr82 each coordinate Na(+).

The protein belongs to the fluoride channel Fluc/FEX (TC 1.A.43) family.

Its subcellular location is the cell inner membrane. It carries out the reaction fluoride(in) = fluoride(out). With respect to regulation, na(+) is not transported, but it plays an essential structural role and its presence is essential for fluoride channel function. Its function is as follows. Fluoride-specific ion channel. Important for reducing fluoride concentration in the cell, thus reducing its toxicity. In Francisella tularensis subsp. tularensis (strain FSC 198), this protein is Fluoride-specific ion channel FluC.